Here is a 601-residue protein sequence, read N- to C-terminus: RNA polymerase II C-terminal domain phosphatase-like 5 (601 aa).

A disordered region spans residues 1–20; the sequence is MFVAKNLSPERESKRQKKEP. Residues 8–20 are compositionally biased toward basic and acidic residues; sequence SPERESKRQKKEP. 2 consecutive FCP1 homology domains span residues 84 to 259 and 381 to 553; these read LNMK…TDES and LNEK…DESE.

Expressed in roots, seedlings, hypocotyls, cotyledons, leaves, siliques and flowers.

The protein resides in the nucleus. The catalysed reaction is O-phospho-L-seryl-[protein] + H2O = L-seryl-[protein] + phosphate. The enzyme catalyses O-phospho-L-threonyl-[protein] + H2O = L-threonyl-[protein] + phosphate. Mediates the dephosphorylation of 'Ser-2' of the heptad repeats YSPTSPS in the C-terminal domain of the largest RNA polymerase II subunit (RPB1). This promotes the activity of RNA polymerase II. Positively regulates abscisic acid (ABA) and drought responses, including the regulation of specific genes expression. The chain is RNA polymerase II C-terminal domain phosphatase-like 5 from Arabidopsis thaliana (Mouse-ear cress).